A 357-amino-acid polypeptide reads, in one-letter code: 3-isopropylmalate dehydrogenase (357 aa).

76 to 89 (GPQWDTIDPSLRPE) lines the NAD(+) pocket. Substrate-binding residues include Arg96, Arg106, Arg134, and Asp224. Mg(2+) is bound by residues Asp224, Asp248, and Asp252. 282–294 (GSAPDIAGKGIAN) provides a ligand contact to NAD(+).

It belongs to the isocitrate and isopropylmalate dehydrogenases family. LeuB type 1 subfamily. Homodimer. Requires Mg(2+) as cofactor. It depends on Mn(2+) as a cofactor.

The protein resides in the cytoplasm. It carries out the reaction (2R,3S)-3-isopropylmalate + NAD(+) = 4-methyl-2-oxopentanoate + CO2 + NADH. It functions in the pathway amino-acid biosynthesis; L-leucine biosynthesis; L-leucine from 3-methyl-2-oxobutanoate: step 3/4. Functionally, catalyzes the oxidation of 3-carboxy-2-hydroxy-4-methylpentanoate (3-isopropylmalate) to 3-carboxy-4-methyl-2-oxopentanoate. The product decarboxylates to 4-methyl-2 oxopentanoate. The chain is 3-isopropylmalate dehydrogenase from Xanthomonas oryzae pv. oryzae (strain MAFF 311018).